The primary structure comprises 139 residues: Trafficking protein particle complex subunit 2-like protein (139 aa).

It belongs to the TRAPP small subunits family. Sedlin subfamily. As to quaternary structure, component of the multisubunit TRAPP (transport protein particle) complex, which includes at least TRAPPC2, TRAPPC2L, TRAPPC3, TRAPPC3L, TRAPPC4, TRAPPC5, TRAPPC8, TRAPPC9, TRAPPC10, TRAPPC11 and TRAPPC12. Interacts with the heterodimer TRAPPC3-TRAPPC6A.

Its subcellular location is the cytoplasm. It is found in the perinuclear region. It localises to the endoplasmic reticulum. The protein localises to the golgi apparatus. Its function is as follows. May play a role in vesicular transport from endoplasmic reticulum to Golgi. The chain is Trafficking protein particle complex subunit 2-like protein (Trappc2l) from Mus musculus (Mouse).